Here is a 478-residue protein sequence, read N- to C-terminus: Violaxanthin de-epoxidase, chloroplastic (478 aa).

The stretch at 388–453 (LVERLEKKVE…RELSKEEMDV (66 aa)) forms a coiled coil.

Belongs to the calycin superfamily. Lipocalin family.

It is found in the plastid. The protein resides in the chloroplast thylakoid membrane. The enzyme catalyses all-trans-violaxanthin + 2 L-ascorbate = all-trans-zeaxanthin + 2 L-dehydroascorbate + 2 H2O. In terms of biological role, part of the xanthophyll (or violaxanthin) cycle for controlling the concentration of zeaxanthin in chloroplasts. Catalyzes the two-step mono de-epoxidation reaction. Stereospecific for all-trans xanthophylls. Zeaxanthin induces the dissipation of excitation energy in the chlorophyll of the light-harvesting protein complex of photosystem II. The chain is Violaxanthin de-epoxidase, chloroplastic (VDE1) from Nicotiana tabacum (Common tobacco).